We begin with the raw amino-acid sequence, 354 residues long: Photosystem II D2 protein (354 aa).

Thr2 is subject to N-acetylthreonine. Thr2 carries the post-translational modification Phosphothreonine. A helical transmembrane segment spans residues 42–62 (CAYFALGGWFTGTTFVTSWYT). His119 is a chlorophyll a binding site. A helical transmembrane segment spans residues 126–142 (GFMLRQFELARSVQLRP). 2 residues coordinate pheophytin a: Gln131 and Asn144. The helical transmembrane segment at 154–167 (VFVSVFLIYPLGQS) threads the bilayer. His199 contributes to the chlorophyll a binding site. A helical membrane pass occupies residues 209-229 (AALLCAIHGATVENTLFEDGD). A plastoquinone contacts are provided by His216 and Phe263. His216 is a Fe cation binding site. His270 contributes to the Fe cation binding site. A helical membrane pass occupies residues 280-296 (GLWMSALGVVGLALNLR).

Belongs to the reaction center PufL/M/PsbA/D family. As to quaternary structure, PSII is composed of 1 copy each of membrane proteins PsbA, PsbB, PsbC, PsbD, PsbE, PsbF, PsbH, PsbI, PsbJ, PsbK, PsbL, PsbM, PsbT, PsbX, PsbY, PsbZ, Psb30/Ycf12, at least 3 peripheral proteins of the oxygen-evolving complex and a large number of cofactors. It forms dimeric complexes. It depends on The D1/D2 heterodimer binds P680, chlorophylls that are the primary electron donor of PSII, and subsequent electron acceptors. It shares a non-heme iron and each subunit binds pheophytin, quinone, additional chlorophylls, carotenoids and lipids. There is also a Cl(-1) ion associated with D1 and D2, which is required for oxygen evolution. The PSII complex binds additional chlorophylls, carotenoids and specific lipids. as a cofactor.

Its subcellular location is the plastid. It localises to the chloroplast thylakoid membrane. It catalyses the reaction 2 a plastoquinone + 4 hnu + 2 H2O = 2 a plastoquinol + O2. In terms of biological role, photosystem II (PSII) is a light-driven water:plastoquinone oxidoreductase that uses light energy to abstract electrons from H(2)O, generating O(2) and a proton gradient subsequently used for ATP formation. It consists of a core antenna complex that captures photons, and an electron transfer chain that converts photonic excitation into a charge separation. The D1/D2 (PsbA/PsbD) reaction center heterodimer binds P680, the primary electron donor of PSII as well as several subsequent electron acceptors. D2 is needed for assembly of a stable PSII complex. This Piper cenocladum (Ant piper) protein is Photosystem II D2 protein.